A 745-amino-acid polypeptide reads, in one-letter code: 1,4-alpha-glucan branching enzyme GlgB (745 aa).

The Nucleophile role is filled by Asp416. Glu469 (proton donor) is an active-site residue.

The protein belongs to the glycosyl hydrolase 13 family. GlgB subfamily. In terms of assembly, monomer.

The enzyme catalyses Transfers a segment of a (1-&gt;4)-alpha-D-glucan chain to a primary hydroxy group in a similar glucan chain.. Its pathway is glycan biosynthesis; glycogen biosynthesis. Functionally, catalyzes the formation of the alpha-1,6-glucosidic linkages in glycogen by scission of a 1,4-alpha-linked oligosaccharide from growing alpha-1,4-glucan chains and the subsequent attachment of the oligosaccharide to the alpha-1,6 position. The chain is 1,4-alpha-glucan branching enzyme GlgB from Shewanella sp. (strain MR-4).